The sequence spans 49 residues: MQEERNIWNWGFTSGAENWNGRLAMLGFIAALLTESLTGQGTLHFLGIL.

It belongs to the ELIP/psbS family.

The protein resides in the plastid. Its subcellular location is the cyanelle. In terms of biological role, possible role in chlorophyll and/or carotenoid binding. This is an uncharacterized protein from Cyanophora paradoxa.